A 431-amino-acid chain; its full sequence is Nuclear receptor subfamily 1 group I member 2 (431 aa).

A DNA-binding region (nuclear receptor) is located at residues 35 to 104 (LQICRVCGDK…RLRKCLESGM (70 aa)). 2 consecutive NR C4-type zinc fingers follow at residues 38–58 (CRVC…CEGC) and 74–99 (CPFR…LRKC). The Bipartite nuclear localization signal motif lies at 63-89 (RRAMKRNVRLRCPFRKGTCEITRKTRR). The hinge stretch occupies residues 105–142 (KKEMIMSDAAVEQRRALIKRKKREKIEAPPPGGQGLTE). Positions 143–430 (EQQALIQELM…LMQELFSSTD (288 aa)) constitute an NR LBD domain. Residues Ser-244 and 282–285 (ILRF) contribute to the hyperforin site.

The protein belongs to the nuclear hormone receptor family. NR1 subfamily. Heterodimer with RXRA. Interacts with NCOA1. Interacts (via domain NR LBD) with CRY1 and CRY2 in a ligand-dependent manner.

It is found in the nucleus. Functionally, nuclear receptor that binds and is activated by a variety of endogenous and xenobiotic compounds. Transcription factor that activates the transcription of multiple genes involved in the metabolism and secretion of potentially harmful xenobiotics, endogenous compounds and drugs. Response to specific ligands is species-specific, due to differences in the ligand-binding domain. Binds to a response element in the promoters of the CYP3A4 and ABCB1/MDR1 genes. Activated by naturally occurring steroids such as pregnenolone and progesterone, the cholesterol metabolite 5-beta-cholestane-3-alpha,7-alpha,12-alpha-triol, synthetic glucocorticoids and antiglucocorticoids and 16-alpha-carbonitrile (PCN). The chain is Nuclear receptor subfamily 1 group I member 2 (Nr1i2) from Mus musculus (Mouse).